Reading from the N-terminus, the 396-residue chain is Tryptophan synthase beta chain (396 aa).

Position 88 is an N6-(pyridoxal phosphate)lysine (Lys88).

Belongs to the TrpB family. Tetramer of two alpha and two beta chains. It depends on pyridoxal 5'-phosphate as a cofactor.

The catalysed reaction is (1S,2R)-1-C-(indol-3-yl)glycerol 3-phosphate + L-serine = D-glyceraldehyde 3-phosphate + L-tryptophan + H2O. It participates in amino-acid biosynthesis; L-tryptophan biosynthesis; L-tryptophan from chorismate: step 5/5. In terms of biological role, the beta subunit is responsible for the synthesis of L-tryptophan from indole and L-serine. The chain is Tryptophan synthase beta chain from Shewanella sp. (strain ANA-3).